The following is a 367-amino-acid chain: MEEHRLGGGGGGGGGGGRPPIPGAAGRKLPGLSRHASFVRSPANSTKSGTEKTFENMDAVAYMPVVRSGGWADIGSRHTMEDVFICSDNLMKEFGVESFEDGPSAFYGVFDGHGGKHAADFVCSNLARFIVEDEDFPREIEKALSSAFLQTDAAFADACSVNSSLASGTTALAALVVGRSLLVANAGDCRAVLCCRGKAIEMSRDHKPSCNREKVRIEASGGYVYDGYLNGQLNVARAIGDWHMEGMKACDGLGPLSAEPEVMIRNLTEEDEFLIIGCDGIWDVFRSQNAVDFARRKLQEHNDPVTCCKELVDEAIKRKSGDNLSVVVICFNSRPPPVLTTPRPRVQRSISAEGLRELQSFLDSLAD.

A disordered region spans residues 1–29; it reads MEEHRLGGGGGGGGGGGRPPIPGAAGRKL. A compositionally biased stretch (gly residues) spans 7 to 18; it reads GGGGGGGGGGGR. Positions 67 to 331 constitute a PPM-type phosphatase domain; it reads RSGGWADIGS…DNLSVVVICF (265 aa). Positions 111, 112, 279, and 322 each coordinate Mn(2+).

This sequence belongs to the PP2C family. The cofactor is Mg(2+). Mn(2+) serves as cofactor.

It carries out the reaction O-phospho-L-seryl-[protein] + H2O = L-seryl-[protein] + phosphate. It catalyses the reaction O-phospho-L-threonyl-[protein] + H2O = L-threonyl-[protein] + phosphate. In Oryza sativa subsp. japonica (Rice), this protein is Probable protein phosphatase 2C 57.